The primary structure comprises 156 residues: Arginine repressor (156 aa).

It belongs to the ArgR family.

Its subcellular location is the cytoplasm. It functions in the pathway amino-acid biosynthesis; L-arginine biosynthesis [regulation]. In terms of biological role, regulates arginine biosynthesis genes. In Shewanella putrefaciens (strain CN-32 / ATCC BAA-453), this protein is Arginine repressor.